The sequence spans 257 residues: Enterotoxin type A (257 aa).

The signal sequence occupies residues 1–27; the sequence is MKKTAFILLLFIALTWTTSPLVNGSEK. An intrachain disulfide couples C120 to C130. The Zn(2+) site is built by H211, H249, and D251.

It belongs to the staphylococcal/streptococcal toxin family. Monomer. Interacts with MHC class II molecules alpha/HLA-DRB1 and beta/HLA-DRA chains. The interaction with MHC-II molecules occurs at both zinc-dependent and zinc-independent sites. Interacts with T-cell receptor beta variable 7-9/TRBV7-9. Requires Zn(2+) as cofactor.

The protein resides in the secreted. Its function is as follows. Staphylococcal enterotoxin that activates the host immune system by binding as unprocessed molecules to major histocompatibility (MHC) complex class II and T-cell receptor (TCR) molecules. In turn, waves of cellular activation, cytokine production, and migration into the lung tissue and airways occur via alphabeta T-cells. Also causes the intoxication staphylococcal food poisoning syndrome. The illness is characterized by high fever, hypotension, diarrhea, shock, and in some cases death. This Staphylococcus aureus (strain Newman) protein is Enterotoxin type A (sea).